We begin with the raw amino-acid sequence, 712 residues long: Phosphoribosylformylglycinamidine synthase subunit PurL (712 aa).

His32 is an active-site residue. Tyr35 serves as a coordination point for ATP. Glu76 contributes to the Mg(2+) binding site. Residues 77 to 80 (SHNH) and Arg99 each bind substrate. The active-site Proton acceptor is the His78. Residue Asp100 participates in Mg(2+) binding. Residue Gln223 coordinates substrate. Residue Asp251 participates in Mg(2+) binding. 295-297 (ESQ) serves as a coordination point for substrate. Positions 470 and 507 each coordinate ATP. Position 508 (Asn508) interacts with Mg(2+). Residue Ser510 participates in substrate binding.

Belongs to the FGAMS family. In terms of assembly, monomer. Part of the FGAM synthase complex composed of 1 PurL, 1 PurQ and 2 PurS subunits.

The protein resides in the cytoplasm. It carries out the reaction N(2)-formyl-N(1)-(5-phospho-beta-D-ribosyl)glycinamide + L-glutamine + ATP + H2O = 2-formamido-N(1)-(5-O-phospho-beta-D-ribosyl)acetamidine + L-glutamate + ADP + phosphate + H(+). It functions in the pathway purine metabolism; IMP biosynthesis via de novo pathway; 5-amino-1-(5-phospho-D-ribosyl)imidazole from N(2)-formyl-N(1)-(5-phospho-D-ribosyl)glycinamide: step 1/2. In terms of biological role, part of the phosphoribosylformylglycinamidine synthase complex involved in the purines biosynthetic pathway. Catalyzes the ATP-dependent conversion of formylglycinamide ribonucleotide (FGAR) and glutamine to yield formylglycinamidine ribonucleotide (FGAM) and glutamate. The FGAM synthase complex is composed of three subunits. PurQ produces an ammonia molecule by converting glutamine to glutamate. PurL transfers the ammonia molecule to FGAR to form FGAM in an ATP-dependent manner. PurS interacts with PurQ and PurL and is thought to assist in the transfer of the ammonia molecule from PurQ to PurL. The protein is Phosphoribosylformylglycinamidine synthase subunit PurL of Thermococcus gammatolerans (strain DSM 15229 / JCM 11827 / EJ3).